Consider the following 472-residue polypeptide: Carboxypeptidase Q (472 aa).

Positions 1-20 (MKFLIFAFFGGVHLLSLCSG) are cleaved as a signal peptide. The propeptide occupies 21 to 44 (KAIYKNGISKRTFEEIKEEIASYG). N-linked (GlcNAc...) asparagine glycans are attached at residues Asn61 and Asn179. The Zn(2+) site is built by His290 and Asp302. The active-site Nucleophile is the Glu336. Residue Glu337 coordinates Zn(2+). N-linked (GlcNAc...) asparagine glycans are attached at residues Asn353 and Asn356. Asp364 contacts Zn(2+). The N-linked (GlcNAc...) asparagine glycan is linked to Asn396. His434 is a Zn(2+) binding site.

This sequence belongs to the peptidase M28 family. In terms of assembly, homodimer. The monomeric form is inactive while the homodimer is active. N-glycosylated. The secreted form is modified by hybrid or complex type oligosaccharide chains.

It localises to the endoplasmic reticulum. The protein localises to the golgi apparatus. It is found in the lysosome. The protein resides in the secreted. Functionally, carboxypeptidase that may play an important role in the hydrolysis of circulating peptides. Catalyzes the hydrolysis of dipeptides with unsubstituted terminals into amino acids. May play a role in the liberation of thyroxine hormone from its thyroglobulin (Tg) precursor. The sequence is that of Carboxypeptidase Q (CPQ) from Pongo abelii (Sumatran orangutan).